Reading from the N-terminus, the 391-residue chain is Isochorismate synthase EntC (391 aa).

Residues T140, T142, V145, and D146 each coordinate Mg(2+). The Proton acceptor role is filled by K147. The active-site Proton donor is E197. G214, S215, E241, A303, R347, and G361 together coordinate isochorismate. Position 241 (E241) interacts with Mg(2+). Residue E376 participates in Mg(2+) binding. K380 serves as a coordination point for isochorismate.

Belongs to the isochorismate synthase family. As to quaternary structure, monomer. Forms a specific pairwise interaction with EntB; this interaction likely facilitates substrate channeling to connect the EntB and EntC active sites. The cofactor is Mg(2+).

The catalysed reaction is chorismate = isochorismate. It functions in the pathway siderophore biosynthesis; enterobactin biosynthesis. Involved in the biosynthesis of the siderophore enterobactin (macrocyclic trimeric lactone of N-(2,3-dihydroxybenzoyl)-serine). Catalyzes the reversible conversion of chorismate to isochorismate. In Escherichia coli O157:H7, this protein is Isochorismate synthase EntC.